Here is a 332-residue protein sequence, read N- to C-terminus: Anthranilate phosphoribosyltransferase (332 aa).

5-phospho-alpha-D-ribose 1-diphosphate is bound by residues Gly-79, 82–83, Thr-87, 89–92, 107–115, and Ser-119; these read GD, NIST, and KHGNRSVSS. Gly-79 is a binding site for anthranilate. Mg(2+) is bound at residue Ser-91. Anthranilate is bound at residue Asn-110. Arg-165 is an anthranilate binding site. Asp-223 and Glu-224 together coordinate Mg(2+).

Belongs to the anthranilate phosphoribosyltransferase family. Homodimer. Requires Mg(2+) as cofactor.

It carries out the reaction N-(5-phospho-beta-D-ribosyl)anthranilate + diphosphate = 5-phospho-alpha-D-ribose 1-diphosphate + anthranilate. It participates in amino-acid biosynthesis; L-tryptophan biosynthesis; L-tryptophan from chorismate: step 2/5. Functionally, catalyzes the transfer of the phosphoribosyl group of 5-phosphorylribose-1-pyrophosphate (PRPP) to anthranilate to yield N-(5'-phosphoribosyl)-anthranilate (PRA). The protein is Anthranilate phosphoribosyltransferase of Vibrio vulnificus (strain CMCP6).